A 566-amino-acid polypeptide reads, in one-letter code: MASSDSNAKLASQRLHSCAGGEESSGQCLEKQGAGARLRGWLAQLLPRADLPGARQKTPFNLNRYVLLLLYSIVVFTTGAVFYGWTALSAMIFKNDGFAYLCPKDASGVYVPDLRATQGKLYICDEQDAAVQKLYTMTFAVACLMSAGAGTLLDWLGPLWTELLGQLLNLVGWLFLAFSTVDRPLYYPALVFIGLGADASMLPTLCIRHLFPGSTGLIITILGSAASASFGIPLVLNTIVENHGVSVRDVSIGYCFFGPVLGVLVALLFMPRRGFALDDAGTIFREPDSGEGEGEAGPYALENGAQGGESQNAQETRRRKLLDPIVSSSFWTQFFSIRYFLIVLYFVVVSWATSYYQQAARRMFSEDVVSVIEVLLPLSFIPCILLGKVADVVGIIRVLFVMNTSGLLTYVFSFFKTDATGYLSACCFMVYMSLLTSQVYVYVEGTFSPNHFGKLIGISNLTGGLLSLVSNPLYENITVNRDNGDPLCIQIAMTALLCVQYVWIFILGFLKSGNSPLLNMDVKAKDDADAEKRADNAPGAEERTSAPSGSSSELAAVTVTPPQDSA.

11 helical membrane passes run 65–85, 137–157, 158–178, 187–207, 216–236, 250–270, 334–354, 367–387, 392–412, 423–443, and 455–475; these read YVLL…FYGW, MTFA…DWLG, PLWT…FLAF, YPAL…TLCI, GLII…PLVL, VSIG…LLFM, FFSI…WATS, DVVS…ILLG, VVGI…TYVF, LSAC…YVYV, and LIGI…PLYE. The N-linked (GlcNAc...) asparagine glycan is linked to Asn-476. The helical transmembrane segment at 489–509 threads the bilayer; the sequence is IQIAMTALLCVQYVWIFILGF.

This sequence belongs to the SLC43A transporter (TC 2.A.1.44) family.

The protein localises to the cell membrane. It catalyses the reaction L-lysine(in) = L-lysine(out). The catalysed reaction is L-arginine(in) = L-arginine(out). It carries out the reaction L-methionine(in) = L-methionine(out). The enzyme catalyses L-leucine(in) = L-leucine(out). Cationic and neutral amino acid transporter. Transports lysine with high affinity. Can transport arginine, methionine and leucine. Does not require inorganic ions, such as sodium, chloride, potassium, calcium or magnesium, for transport activity. The protein is Amino acid transporter 6-1 of Toxoplasma gondii (strain ATCC 50611 / Me49).